The sequence spans 449 residues: Ribosomal protein uS12 methylthiotransferase RimO (449 aa).

The region spanning 7 to 123 (QKVSMVSLGC…VAEILAEHHA (117 aa)) is the MTTase N-terminal domain. Residues cysteine 16, cysteine 52, cysteine 86, cysteine 161, cysteine 165, and cysteine 168 each coordinate [4Fe-4S] cluster. In terms of domain architecture, Radical SAM core spans 147 to 377 (SSPGWYAYLK…MKTQARVSFR (231 aa)). Residues 380–448 (RAMVGQTEQV…DYDLVAEMIE (69 aa)) form the TRAM domain.

This sequence belongs to the methylthiotransferase family. RimO subfamily. [4Fe-4S] cluster is required as a cofactor.

It is found in the cytoplasm. It carries out the reaction L-aspartate(89)-[ribosomal protein uS12]-hydrogen + (sulfur carrier)-SH + AH2 + 2 S-adenosyl-L-methionine = 3-methylsulfanyl-L-aspartate(89)-[ribosomal protein uS12]-hydrogen + (sulfur carrier)-H + 5'-deoxyadenosine + L-methionine + A + S-adenosyl-L-homocysteine + 2 H(+). In terms of biological role, catalyzes the methylthiolation of an aspartic acid residue of ribosomal protein uS12. The sequence is that of Ribosomal protein uS12 methylthiotransferase RimO from Trichlorobacter lovleyi (strain ATCC BAA-1151 / DSM 17278 / SZ) (Geobacter lovleyi).